Consider the following 431-residue polypeptide: Histidine--tRNA ligase (431 aa).

This sequence belongs to the class-II aminoacyl-tRNA synthetase family. Homodimer.

The protein localises to the cytoplasm. It catalyses the reaction tRNA(His) + L-histidine + ATP = L-histidyl-tRNA(His) + AMP + diphosphate + H(+). In Neisseria meningitidis serogroup C / serotype 2a (strain ATCC 700532 / DSM 15464 / FAM18), this protein is Histidine--tRNA ligase.